The primary structure comprises 516 residues: Delta(24)-sterol reductase (516 aa).

A signal peptide spans 1–22; it reads MEPAVSLAVCALLFLLWVRVKG. The Lumenal segment spans residues 23–31; sequence LEFVLIHQR. The chain crosses the membrane as a helical span at residues 32–52; it reads WVFVCLFLLPLSLIFDIYYYV. Residues 53–516 lie on the Cytoplasmic side of the membrane; sequence RAWVVFKLSS…YDKICKAARH (464 aa). The region spanning 58 to 234 is the FAD-binding PCMH-type domain; sequence FKLSSAPRLH…VAAEIRIIPA (177 aa). 163 to 175 serves as a coordination point for FAD; that stretch reads TVGGLIMGTGIES.

Belongs to the FAD-binding oxidoreductase/transferase type 4 family. FAD is required as a cofactor.

The protein resides in the endoplasmic reticulum membrane. It localises to the golgi apparatus membrane. The enzyme catalyses 5alpha-cholest-8-en-3beta-ol + NADP(+) = zymosterol + NADPH + H(+). It catalyses the reaction cholesterol + NADP(+) = desmosterol + NADPH + H(+). The catalysed reaction is lanosterol + NADPH + H(+) = 24,25-dihydrolanosterol + NADP(+). The protein operates within steroid biosynthesis; cholesterol biosynthesis. Its function is as follows. Catalyzes the reduction of the delta-24 double bond of sterol intermediates during cholesterol biosynthesis. In addition to its cholesterol-synthesizing activity, can protect cells from oxidative stress by reducing caspase 3 activity during apoptosis induced by oxidative stress. Also protects against amyloid-beta peptide-induced apoptosis. This is Delta(24)-sterol reductase (Dhcr24) from Mus musculus (Mouse).